The primary structure comprises 522 residues: Peptide chain release factor 3 (522 aa).

Residues Lys-9–Gln-276 enclose the tr-type G domain. GTP contacts are provided by residues Ser-18–Thr-25, Asp-86–His-90, and Asn-140–Asp-143.

This sequence belongs to the TRAFAC class translation factor GTPase superfamily. Classic translation factor GTPase family. PrfC subfamily.

Its subcellular location is the cytoplasm. Increases the formation of ribosomal termination complexes and stimulates activities of RF-1 and RF-2. It binds guanine nucleotides and has strong preference for UGA stop codons. It may interact directly with the ribosome. The stimulation of RF-1 and RF-2 is significantly reduced by GTP and GDP, but not by GMP. This chain is Peptide chain release factor 3, found in Lactobacillus johnsonii (strain CNCM I-12250 / La1 / NCC 533).